The primary structure comprises 232 residues: Octanoyltransferase (232 aa).

The 176-residue stretch at 44 to 219 (EHTGDELWVV…QLARQFGLVL (176 aa)) folds into the BPL/LPL catalytic domain. Substrate contacts are provided by residues 83 to 90 (RGGQVTYH), 150 to 152 (ALG), and 163 to 165 (GLS). The Acyl-thioester intermediate role is filled by cysteine 181.

The protein belongs to the LipB family.

Its subcellular location is the cytoplasm. The catalysed reaction is octanoyl-[ACP] + L-lysyl-[protein] = N(6)-octanoyl-L-lysyl-[protein] + holo-[ACP] + H(+). It functions in the pathway protein modification; protein lipoylation via endogenous pathway; protein N(6)-(lipoyl)lysine from octanoyl-[acyl-carrier-protein]: step 1/2. Its function is as follows. Catalyzes the transfer of endogenously produced octanoic acid from octanoyl-acyl-carrier-protein onto the lipoyl domains of lipoate-dependent enzymes. Lipoyl-ACP can also act as a substrate although octanoyl-ACP is likely to be the physiological substrate. This chain is Octanoyltransferase, found in Xanthomonas campestris pv. campestris (strain B100).